A 91-amino-acid polypeptide reads, in one-letter code: Cytochrome b-c1 complex subunit 10, mitochondrial (91 aa).

The Mitochondrial matrix portion of the chain corresponds to 1–34 (MFATSILRSAYPAYKSPYGPKYQYQPHIDGITPK). The helical transmembrane segment at 35 to 58 (QLVRILPTAAAWTGVALFAVVYYA) threads the bilayer. The Mitochondrial intermembrane segment spans residues 59–91 (SGIPRLRRDVLQRIPYLGERYFVNEIPASDNPF).

The protein belongs to the UQCR11/QCR10 family. As to quaternary structure, component of the ubiquinol-cytochrome c oxidoreductase (cytochrome b-c1 complex, complex III, CIII), a multisubunit enzyme composed of 10 subunits. The complex is composed of 3 respiratory subunits cytochrome b (cob), cytochrome c1 (cyt-1) and Rieske protein (fes-1), 2 core protein subunits pep and ucr-1, and 5 low-molecular weight protein subunits qcr6, qcr7, qcr8, qcr9 and probably NCU16844/qcr10. The complex exists as an obligatory dimer and forms supercomplexes (SCs) in the inner mitochondrial membrane with NADH-ubiquinone oxidoreductase (complex I, CI) and cytochrome c oxidase (complex IV, CIV), resulting in different assemblies (supercomplexes SCI(1)III(2), SCIII(2)IV(1) and SCIII(2)IV(2) as well as higher order I(x)III(y)IV(z) megacomplexes).

The protein resides in the mitochondrion inner membrane. Component of the ubiquinol-cytochrome c oxidoreductase, a multisubunit transmembrane complex that is part of the mitochondrial electron transport chain which drives oxidative phosphorylation. The respiratory chain contains 3 multisubunit complexes succinate dehydrogenase (complex II, CII), ubiquinol-cytochrome c oxidoreductase (cytochrome b-c1 complex, complex III, CIII) and cytochrome c oxidase (complex IV, CIV), that cooperate to transfer electrons derived from NADH and succinate to molecular oxygen, creating an electrochemical gradient over the inner membrane that drives transmembrane transport and the ATP synthase. The cytochrome b-c1 complex catalyzes electron transfer from ubiquinol to cytochrome c, linking this redox reaction to translocation of protons across the mitochondrial inner membrane, with protons being carried across the membrane as hydrogens on the quinol. In the process called Q cycle, 2 protons are consumed from the matrix, 4 protons are released into the intermembrane space and 2 electrons are passed to cytochrome c. This chain is Cytochrome b-c1 complex subunit 10, mitochondrial, found in Neurospora crassa (strain ATCC 24698 / 74-OR23-1A / CBS 708.71 / DSM 1257 / FGSC 987).